Consider the following 129-residue polypeptide: Protein Turandot B1 (129 aa).

The N-terminal stretch at 1–21 (MNSATSLMCFALLLISPLCMG) is a signal peptide.

It belongs to the Turandot family.

It is found in the secreted. In terms of biological role, a humoral factor that may play a role in stress tolerance. The sequence is that of Protein Turandot B1 (TotB1) from Drosophila erecta (Fruit fly).